The chain runs to 219 residues: MSLASIPSSSPVASPYFRCRTYIFSFSSSPLCLYFPRGDSTSLRPRVRALRTESDGAKIGNSESYGSELLRRPRIASEESSEEEEEEEEENSEGDEFVDWEDKILEVTVPLVGFVRMILHSGKYANRDRLSPEHERTIIEMLLPYHPECEKKIGCGIDYIMVGHHPDFESSRCMFIVRKDGEVVDFSYWKCIKGLIKKKYPLYADSFILRHFRKRRQNR.

A chloroplast-targeting transit peptide spans 1–48; it reads MSLASIPSSSPVASPYFRCRTYIFSFSSSPLCLYFPRGDSTSLRPRVR. A disordered region spans residues 70–96; that stretch reads LRRPRIASEESSEEEEEEEEENSEGDE. Residues 79 to 96 show a composition bias toward acidic residues; the sequence is ESSEEEEEEEEENSEGDE.

As to expression, expressed in leaves, stems, flowers and siliques.

The protein localises to the plastid. It localises to the chloroplast. In terms of biological role, required for normal plastid function and plant development. Required for correct plastid ribosome assembly. Required for processing and maturation of 4.5S rRNA. The sequence is that of Protein DCL homolog, chloroplastic from Arabidopsis thaliana (Mouse-ear cress).